The following is a 1473-amino-acid chain: G8 domain-containing protein DDB_G0286311 (1473 aa).

A signal peptide spans 1–21 (MKRFFIVILFILLVCIFNVKS). The chain crosses the membrane as a helical span at residues 105–125 (IVLMIATITGSLLFIRFNIGF). N-linked (GlcNAc...) asparagine glycosylation occurs at N126. A helical transmembrane segment spans residues 130 to 150 (TLIILIIGTIFLIGSSHSITL). N-linked (GlcNAc...) asparagine glycans are attached at residues N203, N241, and N275. Low complexity predominate over residues 298–375 (TGTTPTTTPT…PTTTPTTTPT (78 aa)). The tract at residues 298–400 (TGTTPTTTPT…SSSPSSPSFS (103 aa)) is disordered. A compositionally biased stretch (polar residues) spans 376 to 389 (DSCPTTSTWRPTMA). Positions 390–400 (SSSSPSSPSFS) are enriched in low complexity. N-linked (GlcNAc...) asparagine glycans are attached at residues N444, N637, N680, N1078, N1088, N1176, N1206, N1225, N1389, and N1424. The 129-residue stretch at 626–754 (SIWSSGIVPL…YHNTWSKLST (129 aa)) folds into the G8 domain.

This sequence belongs to the comF family.

The protein localises to the membrane. This is G8 domain-containing protein DDB_G0286311 from Dictyostelium discoideum (Social amoeba).